The sequence spans 79 residues: MTDIKIDQTLDTLGLRCPEPVMLTRKTIRNMAEGEVLLIVADDPATTRDIPSFCEFMDHQLLNSETENTPYRYWVKKGL.

The active-site Cysteine persulfide intermediate is Cys17.

The protein belongs to the sulfur carrier protein TusA family.

It localises to the cytoplasm. Sulfur carrier protein which probably makes part of a sulfur-relay system. In Actinobacillus pleuropneumoniae serotype 7 (strain AP76), this protein is Sulfur carrier protein TusA.